Consider the following 277-residue polypeptide: Caspase-3 (277 aa).

M1 carries the post-translational modification N-acetylmethionine. 2 propeptides span residues 1–9 and 10–28; these read MENTENSVD and SKSIKNLEPKIIHGSESMD. Position 11 is an N6-acetyllysine (K11). Residue S26 is modified to Phosphoserine. Catalysis depends on residues H121 and C163. At C163 the chain carries S-nitrosocysteine; in inhibited form. R207 carries the post-translational modification (Microbial infection) ADP-riboxanated arginine.

The protein belongs to the peptidase C14A family. As to quaternary structure, heterotetramer that consists of two anti-parallel arranged heterodimers, each one formed by a 17 kDa (p17) and a 12 kDa (p12) subunit. Interacts with BIRC6/bruce. Post-translationally, cleavage by granzyme B, caspase-6, caspase-8 and caspase-10 generates the two active subunits. Additional processing of the propeptides is likely due to the autocatalytic activity of the activated protease. Active heterodimers between the small subunit of caspase-7 protease and the large subunit of caspase-3 also occur and vice versa. In terms of processing, S-nitrosylated on its catalytic site cysteine in unstimulated human cell lines and denitrosylated upon activation of the Fas apoptotic pathway, associated with an increase in intracellular caspase activity. Fas therefore activates caspase-3 not only by inducing the cleavage of the caspase zymogen to its active subunits, but also by stimulating the denitrosylation of its active site thiol. Ubiquitinated by BIRC6; this activity is inhibited by DIABLO/SMAC. Post-translationally, (Microbial infection) ADP-riboxanation by C.violaceum CopC blocks CASP3 processing, preventing CASP3 activation and ability to recognize and cleave substrates. As to expression, highly expressed in lung, spleen, heart, liver and kidney. Moderate levels in brain and skeletal muscle, and low in testis. Also found in many cell lines, highest expression in cells of the immune system.

Its subcellular location is the cytoplasm. The catalysed reaction is Strict requirement for an Asp residue at positions P1 and P4. It has a preferred cleavage sequence of Asp-Xaa-Xaa-Asp-|- with a hydrophobic amino-acid residue at P2 and a hydrophilic amino-acid residue at P3, although Val or Ala are also accepted at this position.. With respect to regulation, inhibited by isatin sulfonamides. Inhibited by BIRC6; following inhibition of BIRC6-caspase binding by DIABLO/SMAC, BIRC6 is subjected to caspase cleavage, leading to an increase in active caspases. Thiol protease that acts as a major effector caspase involved in the execution phase of apoptosis. Following cleavage and activation by initiator caspases (CASP8, CASP9 and/or CASP10), mediates execution of apoptosis by catalyzing cleavage of many proteins. At the onset of apoptosis, it proteolytically cleaves poly(ADP-ribose) polymerase PARP1 at a '216-Asp-|-Gly-217' bond. Cleaves and activates sterol regulatory element binding proteins (SREBPs) between the basic helix-loop-helix leucine zipper domain and the membrane attachment domain. Cleaves and activates caspase-6, -7 and -9 (CASP6, CASP7 and CASP9, respectively). Cleaves and inactivates interleukin-18 (IL18). Involved in the cleavage of huntingtin. Triggers cell adhesion in sympathetic neurons through RET cleavage. Cleaves and inhibits serine/threonine-protein kinase AKT1 in response to oxidative stress. Acts as an inhibitor of type I interferon production during virus-induced apoptosis by mediating cleavage of antiviral proteins CGAS, IRF3 and MAVS, thereby preventing cytokine overproduction. Also involved in pyroptosis by mediating cleavage and activation of gasdermin-E (GSDME). Cleaves XRCC4 and phospholipid scramblase proteins XKR4, XKR8 and XKR9, leading to promote phosphatidylserine exposure on apoptotic cell surface. Cleaves BIRC6 following inhibition of BIRC6-caspase binding by DIABLO/SMAC. This Homo sapiens (Human) protein is Caspase-3 (CASP3).